A 361-amino-acid polypeptide reads, in one-letter code: DNA replication and repair protein RecF (361 aa).

Position 30–37 (30–37 (GPNGSGKT)) interacts with ATP.

Belongs to the RecF family.

It localises to the cytoplasm. In terms of biological role, the RecF protein is involved in DNA metabolism; it is required for DNA replication and normal SOS inducibility. RecF binds preferentially to single-stranded, linear DNA. It also seems to bind ATP. This is DNA replication and repair protein RecF from Erwinia tasmaniensis (strain DSM 17950 / CFBP 7177 / CIP 109463 / NCPPB 4357 / Et1/99).